A 191-amino-acid chain; its full sequence is MGQGASKIFGKLFSKKEVRILMVGLDAAGKTTILYKLMLGEVVTTVPTIGFNVETVEYKNINFTVWDVGGQDSIRPLWRHYYQNTDALIYVIDSADLEPKRIEDAKNELHTLLGEDELRDAALLVFANKQDLPKAMSTTDLTERLGLQELKKRDWYIQPTCARSGDGLYQGLDWLSDYIFDKKNKKKGKKR.

The N-myristoyl glycine moiety is linked to residue Gly-2. Residues Gly-24–Thr-31, Asp-67–Gln-71, and Asn-128–Asp-131 each bind GTP.

This sequence belongs to the small GTPase superfamily. Arf family.

It is found in the golgi apparatus. GTP-binding protein involved in protein trafficking; may modulate vesicle budding and uncoating within the Golgi apparatus. In Giardia intestinalis (Giardia lamblia), this protein is ADP-ribosylation factor.